The chain runs to 404 residues: Translation initiation factor eIF2B subunit gamma (404 aa).

The protein belongs to the eIF-2B gamma/epsilon subunits family. As to quaternary structure, component of the translation initiation factor 2B (eIF2B) complex which is a heterodecamer of two sets of five different subunits: alpha, beta, gamma, delta and epsilon. Subunits alpha, beta and delta comprise a regulatory subcomplex and subunits epsilon and gamma comprise a catalytic subcomplex. Within the complex, the hexameric regulatory complex resides at the center, with the two heterodimeric catalytic subcomplexes bound on opposite sides.

The protein localises to the cytoplasm. It is found in the cytosol. In terms of biological role, acts as a component of the translation initiation factor 2B (eIF2B) complex, which catalyzes the exchange of GDP for GTP on the eukaryotic initiation factor 2 (eIF2) complex gamma subunit. Its guanine nucleotide exchange factor activity is repressed when bound to eIF2 complex phosphorylated on the alpha subunit, thereby limiting the amount of methionyl-initiator methionine tRNA available to the ribosome and consequently global translation is repressed. The polypeptide is Translation initiation factor eIF2B subunit gamma (Caenorhabditis elegans).